Consider the following 110-residue polypeptide: UPF0367 protein Syncc9605_2376 (110 aa).

This sequence belongs to the UPF0367 family.

This Synechococcus sp. (strain CC9605) protein is UPF0367 protein Syncc9605_2376.